The sequence spans 494 residues: Ell-associated factor Eaf (494 aa).

Residues 119–138 (KTRSEVTNKPSLMSATNAPM) are compositionally biased toward polar residues. Disordered regions lie at residues 119–212 (KTRS…PAWH) and 243–494 (QANI…DDDD). Residues 139 to 156 (SNGAPVPSSAAAGTGSAG) show a composition bias toward low complexity. Over residues 159 to 178 (ENSTMRISSKTKVSTGSRRN) the composition is skewed to polar residues. Position 188 is a phosphoserine (Ser-188). Polar residues-rich tracts occupy residues 243 to 256 (QANISGSSTGSSAG) and 280 to 306 (QQLTQRSSPPMQQQQHQNYGRGSNNYA). Over residues 307 to 319 (QQQQQQQQQQLQQ) the composition is skewed to low complexity. Over residues 320–332 (RASFSHSNHSNSM) the composition is skewed to polar residues. Low complexity predominate over residues 344–373 (QTAQSMAQAAAALEQQIGGELSASSSSSES). A compositionally biased stretch (acidic residues) spans 374-389 (DSSDSDSGSDSDDSTE). Residues 414–424 (HQQQQHMHQLP) are compositionally biased toward low complexity. Residues 437–454 (SHHHHQQQQQSHHHHHHQ) show a composition bias toward basic residues. Low complexity-rich tracts occupy residues 455-464 (QQQQQQHQQS) and 475-488 (NDLLQNDLQLSSNS).

This sequence belongs to the EAF family.

The protein resides in the nucleus. Promotes transcriptional elongation by Su(Tpl)/ELL. Essential for development. The chain is Ell-associated factor Eaf from Drosophila virilis (Fruit fly).